The chain runs to 44 residues: Cuticle protein CP463 (44 aa).

2 tandem repeats follow at residues 3 to 20 and 27 to 44.

As to expression, calcified shell.

The chain is Cuticle protein CP463 from Cancer pagurus (Rock crab).